A 437-amino-acid polypeptide reads, in one-letter code: Matrix remodeling-associated protein 8 (437 aa).

Residues 1 to 22 form the signal peptide; the sequence is MEQLAKLLLWQLLLQQSSVVYL. Residues 23–339 are Extracellular-facing; sequence YSVPADASNP…PESRIHFFQQ (317 aa). 2 Ig-like V-type domains span residues 32-159 and 167-294; these read PDSV…LDIT and EYWD…VFVT. Residues Asn41, Asn121, Asn246, and Asn304 are each glycosylated (N-linked (GlcNAc...) asparagine). 2 cysteine pairs are disulfide-bonded: Cys54–Cys139 and Cys188–Cys274. Residues 340 to 360 traverse the membrane as a helical segment; it reads LGYVLATLLLFVVLLIIVVFI. Topologically, residues 361 to 437 are cytoplasmic; sequence TRKRRQRGYE…DKDFRKEYCK (77 aa).

Homodimer in cis. Does not appear to form trans-homodimers.

Its subcellular location is the cell membrane. Its function is as follows. Transmembrane protein which can modulate activity of various signaling pathways, probably via binding to integrin ITGAV:ITGB3. Mediates heterophilic cell-cell interactions in vitro. In Gallus gallus (Chicken), this protein is Matrix remodeling-associated protein 8 (MXRA8).